The following is a 227-amino-acid chain: Cytidylate kinase (227 aa).

12–20 (GPSGAGKGT) is a binding site for ATP.

The protein belongs to the cytidylate kinase family. Type 1 subfamily.

The protein resides in the cytoplasm. It carries out the reaction CMP + ATP = CDP + ADP. It catalyses the reaction dCMP + ATP = dCDP + ADP. In Enterobacter sp. (strain 638), this protein is Cytidylate kinase.